The chain runs to 366 residues: S-adenosylmethionine:tRNA ribosyltransferase-isomerase (366 aa).

It belongs to the QueA family. As to quaternary structure, monomer.

It is found in the cytoplasm. It carries out the reaction 7-aminomethyl-7-carbaguanosine(34) in tRNA + S-adenosyl-L-methionine = epoxyqueuosine(34) in tRNA + adenine + L-methionine + 2 H(+). It participates in tRNA modification; tRNA-queuosine biosynthesis. Transfers and isomerizes the ribose moiety from AdoMet to the 7-aminomethyl group of 7-deazaguanine (preQ1-tRNA) to give epoxyqueuosine (oQ-tRNA). The chain is S-adenosylmethionine:tRNA ribosyltransferase-isomerase from Parasynechococcus marenigrum (strain WH8102).